Here is a 362-residue protein sequence, read N- to C-terminus: dTDP-glucose 4,6-dehydratase (362 aa).

NAD(+) is bound by residues 11–12, 32–35, 58–59, 80–84, and threonine 99; these read FI, DKLT, DI, and LAAES. Position 84 (serine 84) interacts with substrate. Threonine 133 is a substrate binding site. The active-site Proton donor is aspartate 134. Residues glutamate 135 and tyrosine 167 each act as proton acceptor in the active site. Position 167–171 (167–171) interacts with NAD(+); it reads YSASK. Asparagine 196 is a substrate binding site. Residue asparagine 197 participates in NAD(+) binding. Substrate contacts are provided by residues 206–207, 222–224, arginine 231, asparagine 266, and 300–304; these read KL, PVY, and DRPGH.

It belongs to the NAD(P)-dependent epimerase/dehydratase family. dTDP-glucose dehydratase subfamily. It depends on NAD(+) as a cofactor.

The enzyme catalyses dTDP-alpha-D-glucose = dTDP-4-dehydro-6-deoxy-alpha-D-glucose + H2O. It participates in bacterial outer membrane biogenesis; LPS O-antigen biosynthesis. In terms of biological role, catalyzes the dehydration of dTDP-D-glucose to form dTDP-4-dehydro-6-deoxy-D-glucose via a three-step process involving oxidation, dehydration and reduction. This reaction is a step in the biosynthesis of D-fucofuranose, a component of E.coli O52 O antigen. This Escherichia coli protein is dTDP-glucose 4,6-dehydratase (rmlB).